Here is a 474-residue protein sequence, read N- to C-terminus: Coronin-1C (474 aa).

6 WD repeats span residues 25 to 70 (DDIR…GRID), 78 to 118 (GHTG…LTLS), 128 to 168 (GHSK…ALIN), 172 to 202 (MHSD…RVID), 215 to 249 (AHEG…ALWN), and 263 to 303 (DTSN…PYVH). The stretch at 436-474 (QNEAKLDEILKEIKSIKDTICNQDERISKLEQQMAKIAA) forms a coiled coil. Lys-446 is modified (N6-acetyllysine).

This sequence belongs to the WD repeat coronin family. As to quaternary structure, binds F-actin. Interacts with RCC2. Interacts preferentially with nucleotide-free and GDP-bound RAC1. Interacts with VIM (via head domain). Isoform 1 and isoform 2 appear as homotrimers, while isoform 3 seems to exist as monomers. Interacts with MICAL2; this interaction recruits MICAL2 to the actin filaments. Ubiquitous.

The protein resides in the cell membrane. The protein localises to the cell projection. Its subcellular location is the lamellipodium. It is found in the ruffle membrane. It localises to the cytoplasm. The protein resides in the cytoskeleton. The protein localises to the cell cortex. Its subcellular location is the endosome membrane. It is found in the sarcolemma. It localises to the myofibril. The protein resides in the sarcomere. The protein localises to the synapse. In terms of biological role, plays a role in directed cell migration by regulating the activation and subcellular location of RAC1. Increases the presence of activated RAC1 at the leading edge of migrating cells. Required for normal organization of the cytoskeleton, including the actin cytoskeleton, microtubules and the vimentin intermediate filaments. Plays a role in endoplasmic reticulum-associated endosome fission: localizes to endosome membrane tubules and promotes recruitment of TMCC1, leading to recruitment of the endoplasmic reticulum to endosome tubules for fission. Endosome membrane fission of early and late endosomes is essential to separate regions destined for lysosomal degradation from carriers to be recycled to the plasma membrane. Required for normal cell proliferation, cell migration, and normal formation of lamellipodia. Required for normal distribution of mitochondria within cells. Its function is as follows. Involved in myogenic differentiation. This chain is Coronin-1C, found in Homo sapiens (Human).